Here is a 617-residue protein sequence, read N- to C-terminus: Vacuolar protein sorting-associated protein 33B (617 aa).

Position 2 is an N-acetylalanine (A2).

This sequence belongs to the STXBP/unc-18/SEC1 family. As to quaternary structure, interacts with RAB11A and VIPAS39. Associates with adaptor protein complex 3 (AP-3), clathrin:AP-3 and clathrin:HGS complexes. Phosphorylated on tyrosine residues. Ubiquitous.

Its subcellular location is the late endosome membrane. The protein resides in the lysosome membrane. It is found in the early endosome. It localises to the cytoplasmic vesicle. The protein localises to the clathrin-coated vesicle. Its subcellular location is the recycling endosome. Functionally, may play a role in vesicle-mediated protein trafficking to lysosomal compartments and in membrane docking/fusion reactions of late endosomes/lysosomes. Mediates phagolysosomal fusion in macrophages. Proposed to be involved in endosomal maturation implicating VIPAS39. In epithelial cells, the VPS33B:VIPAS39 complex may play a role in the apical recycling pathway and in the maintenance of the apical-basolateral polarity. Seems to be involved in the sorting of specific cargos from the trans-Golgi network to alpha-granule-destined multivesicular bodies (MVBs) promoting MVBs maturation in megakaryocytes. The chain is Vacuolar protein sorting-associated protein 33B (Vps33b) from Rattus norvegicus (Rat).